The sequence spans 305 residues: Flavin-dependent thymidylate synthase (305 aa).

The 212-residue stretch at 50-261 folds into the ThyX domain; that stretch reads GFVRLIDYLG…PCATASFENH (212 aa). FAD-binding positions include Ser-96, 119-121, and Glu-127; that span reads RHR. DUMP contacts are provided by residues 116–119, 127–131, and Arg-200; these read QWMR and EVSSR. Residues 119–129 carry the ThyX motif motif; the sequence is RHRTARISEVS. FAD contacts are provided by residues 216–218 and His-222; that span reads DLH. Arg-227 provides a ligand contact to dUMP. Arg-227 functions as the Involved in ionization of N3 of dUMP, leading to its activation in the catalytic mechanism.

It belongs to the thymidylate synthase ThyX family. In terms of assembly, homotetramer. The cofactor is FAD.

It carries out the reaction dUMP + (6R)-5,10-methylene-5,6,7,8-tetrahydrofolate + NADPH + H(+) = dTMP + (6S)-5,6,7,8-tetrahydrofolate + NADP(+). It functions in the pathway pyrimidine metabolism; dTTP biosynthesis. Its function is as follows. Catalyzes the reductive methylation of 2'-deoxyuridine-5'-monophosphate (dUMP) to 2'-deoxythymidine-5'-monophosphate (dTMP) while utilizing 5,10-methylenetetrahydrofolate (mTHF) as the methyl donor, and NADPH and FADH(2) as the reductant. The polypeptide is Flavin-dependent thymidylate synthase (Treponema pallidum (strain Nichols)).